The sequence spans 1205 residues: Solute carrier family 12 member 2 (1205 aa).

Met-1 carries the N-acetylmethionine modification. A compositionally biased stretch (low complexity) spans 1 to 22; sequence MEPGPARPRLAPAARPGWGRAA. The segment at 1–102 is disordered; sequence MEPGPARPRL…AAAAAAAAAA (102 aa). Residues 1 to 279 are Cytoplasmic-facing; sequence MEPGPARPRL…AESKGVVKFG (279 aa). The segment covering 23–35 has biased composition (basic residues); the sequence is GCRRRGGPARHGR. A phosphoserine mark is found at Ser-74 and Ser-76. The RFXV motif 1 signature appears at 77–80; it reads RFQV. A compositionally biased stretch (low complexity) spans 87-102; the sequence is AGRAAAAAAAAAAAAA. An RFXV motif 2 motif is present at residues 133–136; the sequence is RFRV. Low complexity predominate over residues 143-155; sequence ASSSADDSLSDAA. The segment at 143–187 is disordered; that stretch reads ASSSADDSLSDAAGVGGDGPNVSFQNGGDTVLSEGSSLHSGGGSG. Thr-196, Thr-200, Thr-205, Thr-210, and Thr-223 each carry phosphothreonine. Ser-235 is modified (phosphoserine). At Thr-259 the chain carries Phosphothreonine. The discontinuously helical transmembrane segment at 280 to 309 threads the bilayer; sequence WIKGVLVRCMLNIWGVMLFIRLSWIVGQAG. Na(+) is bound at residue Leu-290. Residues Asn-291 and Ile-292 each coordinate K(+). Trp-293 lines the Na(+) pocket. Chloride contacts are provided by Gly-294, Val-295, and Met-296. The chain crosses the membrane as a helical span at residues 310-329; that stretch reads IGLSVVVIAMATVVTTITGL. Residues 330-360 are Cytoplasmic-facing; that stretch reads STSAIATNGFVRGGGAYYLISRSLGPEFGGA. A helical transmembrane segment spans residues 361–388; sequence IGLIFAFANAVAVAMYVVGFAETVVELL. Phe-365 lines the chloride pocket. Tyr-376 provides a ligand contact to K(+). At 389–398 the chain is on the extracellular side; the sequence is KEHSILMIDE. A helical transmembrane segment spans residues 399-422; that stretch reads INDIRIIGAITVVILLGISVAGME. Residues 423–425 lie on the Cytoplasmic side of the membrane; the sequence is WEA. A helical transmembrane segment spans residues 426-447; it reads KAQIVLLVILLLAIADFVIGTF. The Extracellular portion of the chain corresponds to 448–479; sequence ISLESKKPKGFFGYKSEIFNENFGPDFREEET. Residues 480 to 497 form a discontinuously helical membrane-spanning segment; the sequence is FFSVFAIFFPAATGILAG. Residues Pro-489, Ala-490, and Thr-492 each contribute to the K(+) site. Positions 489 and 490 each coordinate chloride. Chloride-binding residues include Gly-493 and Ile-494. Residues 498–512 are Cytoplasmic-facing; it reads ANISGDLADPQSAIP. Residues 513 to 534 traverse the membrane as a helical segment; it reads KGTLLAILITTVVYIGIAVSVG. Over 535-591 the chain is Extracellular; it reads SCVVRDATGNVNDTITTELTNCTSAACKLNFDFSYCESNTCSYGLMNNFQVMSMVSG. Asn-546 and Asn-555 each carry an N-linked (GlcNAc...) asparagine glycan. 2 cysteine pairs are disulfide-bonded: Cys-556/Cys-561 and Cys-570/Cys-575. Residues 592–616 form a helical membrane-spanning segment; it reads FAPLISAGIFSATLSSALASLVSAP. Na(+)-binding residues include Ala-603, Ser-606, and Ser-607. At 617 to 644 the chain is on the cytoplasmic side; sequence KIFQALCKDNIYPAFQMFAKGYGKNNEP. 2 consecutive transmembrane segments (helical) span residues 645-665 and 666-684; these read LRGY…AELN and VIAP…LINF. Chloride contacts are provided by Phe-675 and Tyr-679. At 685–707 the chain is on the cytoplasmic side; that stretch reads SVFHASLAKSPGWRPAFKYYNMW. The next 2 helical transmembrane spans lie at 708-725 and 726-738; these read ISLI…VINW and WAAL…VLGL. At 739–1205 the chain is on the cytoplasmic side; that stretch reads YIYVTYKKPD…NHQSVLTFYS (467 aa). Residues 754–771 form a scissor helix region; sequence STQALTYLSALQHSIRLS. A phosphoserine mark is found at Ser-933 and Ser-937. The disordered stretch occupies residues 953-986; sequence SDQDTCKSSGEKSITQKDEEEDGKTPTQPLLKKE. At Ser-987 the chain carries Phosphoserine.

The protein belongs to the SLC12A transporter family. In terms of assembly, homodimer; adopts a domain-swap conformation at the scissor helices connecting the transmembrane domain and C-terminal domain. In terms of processing, phosphorylated at Thr-196, Thr-200 and Thr-205 by OXSR1/OSR1 and STK39/SPAK downstream of WNK kinases (WNK1, WNK2, WNK3 or WNK4), promoting its activity. As to expression, widely expressed. High expression found in the cochlea, cochlear lateral wall, and the choroid plexus. Lower expression found in the cerebellum and the cortex.

It localises to the basolateral cell membrane. It catalyses the reaction K(+)(out) + 2 chloride(out) + Na(+)(out) = K(+)(in) + 2 chloride(in) + Na(+)(in). With respect to regulation, activated following phosphorylation by OXSR1/OSR1 and STK39/SPAK downstream of WNK kinases (WNK1, WNK2, WNK3 or WNK4). Inhibited by bumetanide and furosemide. In terms of biological role, cation-chloride cotransporter which mediates the electroneutral transport of chloride, potassium and/or sodium ions across the membrane. Plays a vital role in the regulation of ionic balance and cell volume. This Mus musculus (Mouse) protein is Solute carrier family 12 member 2 (Slc12a2).